The primary structure comprises 401 residues: Imidazolonepropionase (401 aa).

Residues His-66 and His-68 each contribute to the Fe(3+) site. Zn(2+) contacts are provided by His-66 and His-68. 4-imidazolone-5-propanoate contacts are provided by Arg-75, Tyr-138, and His-171. Tyr-138 provides a ligand contact to N-formimidoyl-L-glutamate. His-236 contributes to the Fe(3+) binding site. A Zn(2+)-binding site is contributed by His-236. Position 239 (Gln-239) interacts with 4-imidazolone-5-propanoate. Asp-311 lines the Fe(3+) pocket. Zn(2+) is bound at residue Asp-311. N-formimidoyl-L-glutamate is bound by residues Asn-313 and Gly-315. 4-imidazolone-5-propanoate is bound at residue Thr-316.

This sequence belongs to the metallo-dependent hydrolases superfamily. HutI family. The cofactor is Zn(2+). Requires Fe(3+) as cofactor.

It localises to the cytoplasm. It catalyses the reaction 4-imidazolone-5-propanoate + H2O = N-formimidoyl-L-glutamate. Its pathway is amino-acid degradation; L-histidine degradation into L-glutamate; N-formimidoyl-L-glutamate from L-histidine: step 3/3. Its function is as follows. Catalyzes the hydrolytic cleavage of the carbon-nitrogen bond in imidazolone-5-propanoate to yield N-formimidoyl-L-glutamate. It is the third step in the universal histidine degradation pathway. This Pseudomonas savastanoi pv. phaseolicola (strain 1448A / Race 6) (Pseudomonas syringae pv. phaseolicola (strain 1448A / Race 6)) protein is Imidazolonepropionase.